The following is a 251-amino-acid chain: tRNA1(Val) (adenine(37)-N6)-methyltransferase (251 aa).

The protein belongs to the methyltransferase superfamily. tRNA (adenine-N(6)-)-methyltransferase family.

It localises to the cytoplasm. It carries out the reaction adenosine(37) in tRNA1(Val) + S-adenosyl-L-methionine = N(6)-methyladenosine(37) in tRNA1(Val) + S-adenosyl-L-homocysteine + H(+). Functionally, specifically methylates the adenine in position 37 of tRNA(1)(Val) (anticodon cmo5UAC). This Shewanella frigidimarina (strain NCIMB 400) protein is tRNA1(Val) (adenine(37)-N6)-methyltransferase.